The following is a 192-amino-acid chain: Fe/S biogenesis protein NfuA (192 aa).

[4Fe-4S] cluster-binding residues include Cys-149 and Cys-152.

The protein belongs to the NfuA family. As to quaternary structure, homodimer. It depends on [4Fe-4S] cluster as a cofactor.

Its function is as follows. Involved in iron-sulfur cluster biogenesis. Binds a 4Fe-4S cluster, can transfer this cluster to apoproteins, and thereby intervenes in the maturation of Fe/S proteins. Could also act as a scaffold/chaperone for damaged Fe/S proteins. This chain is Fe/S biogenesis protein NfuA, found in Shewanella oneidensis (strain ATCC 700550 / JCM 31522 / CIP 106686 / LMG 19005 / NCIMB 14063 / MR-1).